Here is a 490-residue protein sequence, read N- to C-terminus: Phenylacetaldehyde synthase (490 aa).

L-phenylalanine is bound by residues Pro-92, His-193, and His-308. Lys-309 carries the post-translational modification N6-(pyridoxal phosphate)lysine. Residue Phe-338 participates in L-phenylalanine binding.

The protein belongs to the group II decarboxylase family. Homodimer. Pyridoxal 5'-phosphate is required as a cofactor. In terms of tissue distribution, expressed in roots, rosette leaves, stems, cauline leaves and flowers.

It catalyses the reaction L-phenylalanine + O2 + H2O + H(+) = 2-phenylacetaldehyde + H2O2 + NH4(+) + CO2. The catalysed reaction is L-dopa + O2 + H2O + H(+) = 3,4-dihydroxyphenylacetaldehyde + H2O2 + NH4(+) + CO2. Its function is as follows. Bifunctional enzyme that catalyzes the decarboxylation of L-phenylalanine to 2-phenylethylamine, which is then oxidized to form 2-phenylacetaldehyde, a constituent of floral scent. 2-phenylacetaldehyde is a precursor of 2-phenylethanol, another constituent of floral scent. Catalyzes both the decarboxylation and deamination of L-dopa to 3,4-dihydroxylphenylacetaldehyde (DHPAA). The protein is Phenylacetaldehyde synthase of Arabidopsis thaliana (Mouse-ear cress).